The following is a 388-amino-acid chain: MTIQVLVVDDSSFFRRRVSEIVNQDPELEVIGVAVNGKEAVKMAAELKPHVITMDIEMPVMDGITAVREIMANNPIPILMFSSLTHDGAKATLDALDAGALDFLPKRFEDIATNKDEAIRLLQQRIRELGRRRIYKPLSRAGATAVPASARAGLSSTSPTLGSSTLGRSPASGLASSASRNSPTVSTPASAIRASGKQYKALLIGTSTGGPVALQKILTQFPASYPHPILLIQHMPAAFTPAFATRLNGLCQIEVKEAENGDQLKAGCAYLAPGGMQMMVERTGSISRLKVLAGSSDMNYKPSVDITFASASKAFNADVLAVVLTGMGADGREGARMLKTSGSTIWAQDEASCVVYGMPQAVAVAGLSTHSISLDQMAEAILKESGRG.

Positions 4–121 (QVLVVDDSSF…ATNKDEAIRL (118 aa)) constitute a Response regulatory domain. A 4-aspartylphosphate modification is found at Asp-55. The interval 149-190 (SARAGLSSTSPTLGSSTLGRSPASGLASSASRNSPTVSTPAS) is disordered. A compositionally biased stretch (low complexity) spans 153-169 (GLSSTSPTLGSSTLGRS). Over residues 174–189 (LASSASRNSPTVSTPA) the composition is skewed to polar residues. A CheB-type methylesterase domain is found at 188-388 (PASAIRASGK…EAILKESGRG (201 aa)). Active-site residues include Ser-207, His-234, and Asp-330.

Belongs to the CheB family. Post-translationally, phosphorylated by CheA. Phosphorylation of the N-terminal regulatory domain activates the methylesterase activity.

The protein resides in the cytoplasm. The enzyme catalyses [protein]-L-glutamate 5-O-methyl ester + H2O = L-glutamyl-[protein] + methanol + H(+). The catalysed reaction is L-glutaminyl-[protein] + H2O = L-glutamyl-[protein] + NH4(+). Its function is as follows. Involved in chemotaxis. Part of a chemotaxis signal transduction system that modulates chemotaxis in response to various stimuli. Catalyzes the demethylation of specific methylglutamate residues introduced into the chemoreceptors (methyl-accepting chemotaxis proteins or MCP) by CheR. Also mediates the irreversible deamidation of specific glutamine residues to glutamic acid. The protein is Protein-glutamate methylesterase/protein-glutamine glutaminase 1 of Shewanella denitrificans (strain OS217 / ATCC BAA-1090 / DSM 15013).